Reading from the N-terminus, the 181-residue chain is Endoribonuclease YbeY (181 aa).

Histidine 115, histidine 119, and histidine 125 together coordinate Zn(2+).

The protein belongs to the endoribonuclease YbeY family. Requires Zn(2+) as cofactor.

The protein resides in the cytoplasm. Functionally, single strand-specific metallo-endoribonuclease involved in late-stage 70S ribosome quality control and in maturation of the 3' terminus of the 16S rRNA. This chain is Endoribonuclease YbeY, found in Bifidobacterium adolescentis (strain ATCC 15703 / DSM 20083 / NCTC 11814 / E194a).